Here is a 78-residue protein sequence, read N- to C-terminus: UPF0291 protein LBUL_1264 (78 aa).

Belongs to the UPF0291 family.

The protein localises to the cytoplasm. The sequence is that of UPF0291 protein LBUL_1264 from Lactobacillus delbrueckii subsp. bulgaricus (strain ATCC BAA-365 / Lb-18).